A 327-amino-acid chain; its full sequence is Phosphate transport system permease protein PstC (327 aa).

Transmembrane regions (helical) follow at residues 36–56, 89–109, 128–148, 178–198, 235–255, and 294–314; these read AAILVLVLLGGVAISLFAGSW, VITSAIAILIAVPLGIGIAIF, LLAGIPSIIYGIWGLFVLAPF, IGLLTSAMILAIMILPFITSI, IGIMGGVMLALGRALGETMAV, and SSLVALGLILFVITFLILAIA. One can recognise an ABC transmembrane type-1 domain in the interval 85–314; the sequence is IYGTVITSAI…VITFLILAIA (230 aa).

The protein belongs to the binding-protein-dependent transport system permease family. CysTW subfamily.

It localises to the cell inner membrane. Functionally, part of a binding-protein-dependent transport system for phosphate; probably responsible for the translocation of the substrate across the membrane. This is Phosphate transport system permease protein PstC (pstC) from Mesorhizobium japonicum (strain LMG 29417 / CECT 9101 / MAFF 303099) (Mesorhizobium loti (strain MAFF 303099)).